A 319-amino-acid chain; its full sequence is Ribosomal RNA small subunit methyltransferase H (319 aa).

S-adenosyl-L-methionine contacts are provided by residues Gly-34 to His-36, Asp-54, Phe-83, Asp-104, and Gln-111.

This sequence belongs to the methyltransferase superfamily. RsmH family.

The protein localises to the cytoplasm. The catalysed reaction is cytidine(1402) in 16S rRNA + S-adenosyl-L-methionine = N(4)-methylcytidine(1402) in 16S rRNA + S-adenosyl-L-homocysteine + H(+). Functionally, specifically methylates the N4 position of cytidine in position 1402 (C1402) of 16S rRNA. The polypeptide is Ribosomal RNA small subunit methyltransferase H (Lactiplantibacillus plantarum (strain ATCC BAA-793 / NCIMB 8826 / WCFS1) (Lactobacillus plantarum)).